A 296-amino-acid polypeptide reads, in one-letter code: Probable alpha-L-glutamate ligase (296 aa).

One can recognise an ATP-grasp domain in the interval 104-287 (LQLLARQGID…IATLMITFIE (184 aa)). Residues Lys141, 178–179 (EF), Asp187, and 211–213 (RSN) each bind ATP. Mg(2+) is bound by residues Asp248, Glu260, and Asn262. Mn(2+) contacts are provided by Asp248, Glu260, and Asn262.

The protein belongs to the RimK family. The cofactor is Mg(2+). Requires Mn(2+) as cofactor.

The chain is Probable alpha-L-glutamate ligase from Sodalis glossinidius (strain morsitans).